A 459-amino-acid chain; its full sequence is Glycosyl hydrolase family 109 protein 1 (459 aa).

Residues 1–31 (MHNIHRRHFLKAAGAVTAGLVTANIALNANA) constitute a signal peptide (tat-type signal). Residues 64–65 (ER), aspartate 86, 135–138 (WEWH), 155–156 (EV), and asparagine 184 each bind NAD(+). Substrate is bound by residues tyrosine 213, arginine 232, 244–247 (YPTH), and tyrosine 326. An NAD(+)-binding site is contributed by tyrosine 244.

Belongs to the Gfo/Idh/MocA family. Glycosyl hydrolase 109 subfamily. NAD(+) is required as a cofactor. In terms of processing, predicted to be exported by the Tat system. The position of the signal peptide cleavage has not been experimentally proven.

Functionally, glycosidase. This is Glycosyl hydrolase family 109 protein 1 from Shewanella sp. (strain ANA-3).